Reading from the N-terminus, the 106-residue chain is Large ribosomal subunit protein bL21 (106 aa).

Belongs to the bacterial ribosomal protein bL21 family. In terms of assembly, part of the 50S ribosomal subunit. Contacts protein L20.

In terms of biological role, this protein binds to 23S rRNA in the presence of protein L20. The sequence is that of Large ribosomal subunit protein bL21 from Chlamydia pneumoniae (Chlamydophila pneumoniae).